The following is a 444-amino-acid chain: 23S rRNA (uracil(1939)-C(5))-methyltransferase RlmD (444 aa).

Residues 5–64 (KPKLNLTSQTARIVNLSHDGRGIARINGKATFIQGALPGEVVEFQYTRVKKDFDEGKLLS) enclose the TRAM domain. The [4Fe-4S] cluster site is built by Cys-77, Cys-83, Cys-86, and Cys-166. 6 residues coordinate S-adenosyl-L-methionine: Gln-276, Phe-305, Asn-310, Glu-326, Asn-353, and Asp-374. The active-site Nucleophile is Cys-400.

The protein belongs to the class I-like SAM-binding methyltransferase superfamily. RNA M5U methyltransferase family. RlmD subfamily.

The enzyme catalyses uridine(1939) in 23S rRNA + S-adenosyl-L-methionine = 5-methyluridine(1939) in 23S rRNA + S-adenosyl-L-homocysteine + H(+). Catalyzes the formation of 5-methyl-uridine at position 1939 (m5U1939) in 23S rRNA. The sequence is that of 23S rRNA (uracil(1939)-C(5))-methyltransferase RlmD from Legionella pneumophila (strain Lens).